The primary structure comprises 156 residues: Transcription antitermination protein NusB (156 aa).

The protein belongs to the NusB family.

Its function is as follows. Involved in transcription antitermination. Required for transcription of ribosomal RNA (rRNA) genes. Binds specifically to the boxA antiterminator sequence of the ribosomal RNA (rrn) operons. In Rickettsia conorii (strain ATCC VR-613 / Malish 7), this protein is Transcription antitermination protein NusB.